A 61-amino-acid polypeptide reads, in one-letter code: Beta-insect depressant toxin BaIT2 (61 aa).

The region spanning 1–61 (DGYIRRRDGC…TWKSETNTCG (61 aa)) is the LCN-type CS-alpha/beta domain. Intrachain disulfides connect cysteine 10/cysteine 60, cysteine 14/cysteine 35, cysteine 21/cysteine 42, and cysteine 25/cysteine 44.

This sequence belongs to the long (4 C-C) scorpion toxin superfamily. Sodium channel inhibitor family. Beta subfamily. As to expression, expressed by the venom gland.

Its subcellular location is the secreted. Functionally, depressant insect beta-toxins cause a transient contraction paralysis followed by a slow flaccid paralysis. They bind voltage-independently at site-4 of sodium channels (Nav) and shift the voltage of activation toward more negative potentials thereby affecting sodium channel activation and promoting spontaneous and repetitive firing. This toxin is active only on insects. This Buthacus arenicola (North African scorpion) protein is Beta-insect depressant toxin BaIT2.